We begin with the raw amino-acid sequence, 391 residues long: Glycerol-3-phosphate dehydrogenase [NAD(+)] (391 aa).

NAD(+) is bound by residues 46–51 (GSGNWG), phenylalanine 78, and phenylalanine 134. Lysine 157 provides a ligand contact to substrate. Residue alanine 190 participates in NAD(+) binding. Lysine 250 (proton acceptor) is an active-site residue. NAD(+) is bound by residues arginine 315 and glutamine 344. Residue 315 to 316 (RN) coordinates substrate.

It belongs to the NAD-dependent glycerol-3-phosphate dehydrogenase family.

It catalyses the reaction sn-glycerol 3-phosphate + NAD(+) = dihydroxyacetone phosphate + NADH + H(+). This Candida tropicalis (Yeast) protein is Glycerol-3-phosphate dehydrogenase [NAD(+)] (GPD).